We begin with the raw amino-acid sequence, 526 residues long: Fusicoccadiene 8-ol C-16-hydroxylase (526 aa).

Residues Ala34–Leu56 traverse the membrane as a helical segment. N-linked (GlcNAc...) asparagine glycans are attached at residues Asn309, Asn418, and Asn434. Cys470 is a binding site for heme.

This sequence belongs to the cytochrome P450 family. It depends on heme as a cofactor.

The protein localises to the membrane. Its pathway is mycotoxin biosynthesis. In terms of biological role, cytochrome P450 monooxygenase; part of the 2 gene clusters that mediate the biosynthesis of fusicoccins, diterpene glucosides that display phytohormone-like activity and function as potent activators of plasma membrane H(+)-ATPases in plants by modifying 14-3-3 proteins and cause the plant disease constriction canker. The first step in the pathway is performed by the fusicoccadiene synthase PaFS that possesses both prenyl transferase and terpene cyclase activity, converting isopentenyl diphosphate and dimethylallyl diphosphate into geranylgeranyl diphosphate (GGDP) and successively converting GGDP into fusicocca-2,10(14)-diene, a precursor for fusicoccin H. The second step is the oxidation at the C-8 position by the cytochrome P450 monooxygenase PaP450-2 to yield fusicocca-2,10(14)-diene-8-beta-ol. The cytochrome P450 monooxygenase PaP450-1 then catalyzes the hydroxylation at the C-16 position to produce fusicocca-2,10(14)-diene-8-beta,16-diol. The dioxygenase fc-dox then catalyzes the 16-oxydation of fusicocca-2,10(14)-diene-8-beta,16-diol to yield an aldehyde (8-beta-hydroxyfusicocca-1,10(14)-dien-16-al). The short-chain dehydrogenase/reductase fc-sdr catalyzes the reduction of the aldehyde to yield fusicocca-1,10(14)-diene-8-beta,16-diol. The next step is the hydroxylation at C-9 performed by the cytochrome P450 monooxygenase PaP450-3 that leads to fusicoccin H aglycon which is glycosylated to fusicoccin H by the O-glycosyltransferase PaGT. Hydroxylation at C-12 by the cytochrome P450 monooxygenase PaP450-4 leads then to the production of fusicoccin Q and is followed by methylation by the O-methyltransferase PaMT to yield fusicoccin P. Fusicoccin P is further converted to fusicoccin J via prenylation by the O-glucose prenyltransferase PaPT. Cytochrome P450 monooxygenase PaP450-5 then performs hydroxylation at C-19 to yield dideacetyl-fusicoccin A which is acetylated to 3'-O-deacetyl-fusicoccin A by the O-acetyltransferase PaAT-2. Finally, a another acetylation by the O-acetyltransferase PaAT-1 yields fusicoccin A. The protein is Fusicoccadiene 8-ol C-16-hydroxylase of Phomopsis amygdali (Fusicoccum amygdali).